A 309-amino-acid polypeptide reads, in one-letter code: Glutaminase (309 aa).

Residues serine 65, asparagine 117, glutamate 162, asparagine 169, tyrosine 193, tyrosine 245, and valine 263 each contribute to the substrate site.

It belongs to the glutaminase family. Homotetramer.

It catalyses the reaction L-glutamine + H2O = L-glutamate + NH4(+). This chain is Glutaminase, found in Shouchella clausii (strain KSM-K16) (Alkalihalobacillus clausii).